The following is a 75-amino-acid chain: Exodeoxyribonuclease 7 small subunit (75 aa).

This sequence belongs to the XseB family. As to quaternary structure, heterooligomer composed of large and small subunits.

The protein localises to the cytoplasm. It carries out the reaction Exonucleolytic cleavage in either 5'- to 3'- or 3'- to 5'-direction to yield nucleoside 5'-phosphates.. Its function is as follows. Bidirectionally degrades single-stranded DNA into large acid-insoluble oligonucleotides, which are then degraded further into small acid-soluble oligonucleotides. In Listeria welshimeri serovar 6b (strain ATCC 35897 / DSM 20650 / CCUG 15529 / CIP 8149 / NCTC 11857 / SLCC 5334 / V8), this protein is Exodeoxyribonuclease 7 small subunit.